Reading from the N-terminus, the 659-residue chain is Mitochondrial Rho GTPase 1 (659 aa).

Residues 1–631 lie on the Cytoplasmic side of the membrane; that stretch reads MTKTRIRIVV…LTNDIDYRQT (631 aa). Residues 3 to 183 enclose the Miro 1 domain; sequence KTRIRIVVCG…FYLCQRTITN (181 aa). Residues 12 to 19, 61 to 63, and 115 to 118 contribute to the GTP site; these read GDSGVGKT, DTG, and NKCD. EF-hand domains are found at residues 199–234 and 328–363; these read LGVL…CFSK and LGYR…TPGL. Ca(2+) contacts are provided by Asp212, Asp214, Asp216, Glu223, Asp341, Asp343, Asp345, and Glu352. The 166-residue stretch at 444–609 folds into the Miro 2 domain; that stretch reads RKVLNCYMLG…FIKLTEVALE (166 aa). GTP-binding positions include 453 to 460, 489 to 493, and 558 to 561; these read GKGNSGKS, ELKGG, and LKAD. The chain crosses the membrane as a helical; Anchor for type IV membrane protein span at residues 632–652; that stretch reads IVAISSVVGFASLFTFTALKI. The Mitochondrial intermembrane portion of the chain corresponds to 653 to 659; it reads YSSFKNT.

It belongs to the mitochondrial Rho GTPase family.

It localises to the mitochondrion outer membrane. Its function is as follows. Mitochondrial GTPase involved in mitochondrial trafficking. Probably involved in control of anterograde transport of mitochondria and their subcellular distribution. The protein is Mitochondrial Rho GTPase 1 (GEM1) of Kluyveromyces lactis (strain ATCC 8585 / CBS 2359 / DSM 70799 / NBRC 1267 / NRRL Y-1140 / WM37) (Yeast).